The following is a 411-amino-acid chain: Snake venom metalloproteinase ACLF (411 aa).

The first 20 residues, 1-20, serve as a signal peptide directing secretion; it reads MIQVLLVTLCLAAFPYQGSS. A propeptide spanning residues 21 to 189 is cleaved from the precursor; it reads IILESGNVND…KKAFQLNLTP (169 aa). In terms of domain architecture, Peptidase M12B spans 197–393; the sequence is RYVELVIVAD…NNPQCILNKP (197 aa). Ca(2+) contacts are provided by Glu-200 and Asp-284. 3 disulfides stabilise this stretch: Cys-308–Cys-388, Cys-348–Cys-372, and Cys-350–Cys-355. His-333 lines the Zn(2+) pocket. Glu-334 is a catalytic residue. Zn(2+) is bound by residues His-337 and His-343. Cys-388, Asn-391, Val-403, Asn-406, Leu-408, and Glu-410 together coordinate Ca(2+).

The protein belongs to the venom metalloproteinase (M12B) family. P-I subfamily. In terms of assembly, monomer. The cofactor is Zn(2+). In terms of tissue distribution, expressed by the venom gland.

The protein localises to the secreted. With respect to regulation, inhibited by EDTA and 1,10-phenanthroline, but not by PMSF. Its function is as follows. Snake venom zinc metalloprotease that has fibrinolytic activity. The recombinant enzyme cleaves both alpha- and beta-chains of fibrinogen, but not the gamma-chain. The recombinant protein does not produce hemorrhage in mice. Cleaves the peptide substrate Abz-LVEALYQ-EDDnp at the Ala-Leu bond in vitro. This is Snake venom metalloproteinase ACLF (ACLPREF) from Agkistrodon contortrix laticinctus (Broad-banded copperhead).